Here is a 190-residue protein sequence, read N- to C-terminus: Interferon alpha-11 (190 aa).

The first 23 residues, 1–23 (MARLCAFLMILIVMSYWSTCSLG), serve as a signal peptide directing secretion. Intrachain disulfides connect Cys-24–Cys-122 and Cys-52–Cys-162. A glycan (N-linked (GlcNAc...) asparagine) is linked at Asn-101.

It belongs to the alpha/beta interferon family. N-glycosylated.

It is found in the secreted. Functionally, has antiviral and antiproliferative activities. Produced by macrophages and stimulates the production of two enzymes: a protein kinase and an oligoadenylate synthetase. During viral infection, mediates antiviral effect, either directly by inducing interferon-stimulated genes, either indirectly through stimulation of natural killer cells enabling them to control viral replication. The chain is Interferon alpha-11 (Ifna11) from Mus musculus (Mouse).